The chain runs to 497 residues: MTALFPFDNSYARLPSHFFGRVAPTAVEAPRLIRLNRALAVDLGLDPDRLESPEGVEVLAGQRVPEGAEPLAAAYAGHQFGQFVPQLGDGRAILLGEVVGRDGRRDIQLKGSGPTPFSRRGDGRAALGPVLREYLVSEAMHALGIPTTRALAAVTTGEQVIRETALPGAVLTRVASSHIRVGSFQFFAARGDVEGLRALADHAIARHDPEAARADNPYRALLDGVIRRQAALVARWLTVGFIHGVMNTDNMSIAGETIDYGPCAFLDTYDPATAFSSIDRHGRYAYGNQPRIALWNLTRLAEALLPLLSEDETQAVAEAEAALTGFAGQFEAAYHGGLNCKLGLATTRDGDPALAGDLLKTMAENEADFTLTFRRLGEAVPGPDGEPDPAAVEAVRSLFIDPTAYDRWAGGWRRRLKDEAGDAAARRQMMRAANPAFIPRNHRVEEMITAAVERQDFAPFETLLTVLARPYDDQPDFAQYAEPPEGGGRGYRTFCGT.

8 residues coordinate ATP: Gly88, Gly90, Arg91, Lys110, Asp122, Gly123, Arg173, and Arg180. The active-site Proton acceptor is the Asp249. Residues Asn250 and Asp259 each contribute to the Mg(2+) site. ATP is bound at residue Asp259.

It belongs to the SELO family. The cofactor is Mg(2+). Requires Mn(2+) as cofactor.

It carries out the reaction L-seryl-[protein] + ATP = 3-O-(5'-adenylyl)-L-seryl-[protein] + diphosphate. The catalysed reaction is L-threonyl-[protein] + ATP = 3-O-(5'-adenylyl)-L-threonyl-[protein] + diphosphate. The enzyme catalyses L-tyrosyl-[protein] + ATP = O-(5'-adenylyl)-L-tyrosyl-[protein] + diphosphate. It catalyses the reaction L-histidyl-[protein] + UTP = N(tele)-(5'-uridylyl)-L-histidyl-[protein] + diphosphate. It carries out the reaction L-seryl-[protein] + UTP = O-(5'-uridylyl)-L-seryl-[protein] + diphosphate. The catalysed reaction is L-tyrosyl-[protein] + UTP = O-(5'-uridylyl)-L-tyrosyl-[protein] + diphosphate. In terms of biological role, nucleotidyltransferase involved in the post-translational modification of proteins. It can catalyze the addition of adenosine monophosphate (AMP) or uridine monophosphate (UMP) to a protein, resulting in modifications known as AMPylation and UMPylation. The sequence is that of Protein nucleotidyltransferase YdiU from Methylorubrum extorquens (strain CM4 / NCIMB 13688) (Methylobacterium extorquens).